The sequence spans 476 residues: Protein transport protein SEC61 subunit alpha (476 aa).

Residues 1–33 are Cytoplasmic-facing; sequence MSSLRFLDLVKPFVPFLPEVQQPETKIPFNQKL. Residues 34–54 form a helical membrane-spanning segment; that stretch reads MWTGLTLLIFLVMSQMPLYGI. The Lumenal portion of the chain corresponds to 55-76; the sequence is VSSDTSDPLYWLRMMMASNRGT. A helical transmembrane segment spans residues 77-97; the sequence is LMELGITPIISSGMVFQLLAG. The Cytoplasmic portion of the chain corresponds to 98-119; the sequence is THMIDVNLDLKADRELYQTAQK. A helical membrane pass occupies residues 120 to 140; it reads LFAVILSIGTATVYVFTGLYG. At 141-146 the chain is on the lumenal side; it reads PPSDLG. The helical transmembrane segment at 147-167 threads the bilayer; sequence AGIVFLLILQLVVAGMIVILL. Topologically, residues 168–246 are cytoplasmic; the sequence is DELLQKGYGL…YRQNLPNIMN (79 aa). Residues 247–267 form a helical membrane-spanning segment; sequence LLATLVVFAAVIYLQGFRVEI. Topologically, residues 268–361 are lumenal; sequence PVKSSRQRGA…KDALLDPIHT (94 aa). Residues 362–382 traverse the membrane as a helical segment; the sequence is AVYIAYMLTACAVFSKTWIEV. Topologically, residues 383 to 415 are cytoplasmic; sequence SGSSPRDVAKQLKDQGLVMAGHREQSMYKELKR. A helical transmembrane segment spans residues 416-434; that stretch reads IIPTAAAFGGACIGALSVA. Residues 435–440 are Lumenal-facing; sequence SDLMGA. A helical membrane pass occupies residues 441 to 458; that stretch reads LGSGTGTLLAVTIIYGYF. The Cytoplasmic segment spans residues 459 to 476; the sequence is EIAAKEGDLQGMKGMIMG.

The protein belongs to the SecY/SEC61-alpha family. As to quaternary structure, heterotrimeric complex composed of SEC61-alpha, SEC61-beta and SEC61-gamma.

It is found in the endoplasmic reticulum membrane. Functionally, appears to play a crucial role in the insertion of secretory and membrane polypeptides into the ER. It is required for assembly of membrane and secretory proteins and is essential for cell growth. It interacts with other membrane proteins required for protein translocation. Upon binding to SEC62/63 complex, secretory precursor polypeptides may engage SEC61 to begin membrane penetration event. A cycle of assembly and disassembly of SEC62/63 from SEC61 may govern the activity of the translocase. This Neurospora crassa (strain ATCC 24698 / 74-OR23-1A / CBS 708.71 / DSM 1257 / FGSC 987) protein is Protein transport protein SEC61 subunit alpha (sec-61).